We begin with the raw amino-acid sequence, 465 residues long: U4/U6 small nuclear ribonucleoprotein PRP4 (465 aa).

7 WD repeats span residues 173-212, 216-256, 263-302, 305-344, 347-386, 391-432, and 435-464; these read VSTK…PLTQ, SHVG…GGLR, GHER…ELLL, GHDK…KVMT, GHSK…EGQL, AHRN…KMGS, and GHTD…IKLW.

As to quaternary structure, component of the U4/U6-U5 tri-snRNP complex composed of the U4, U6 and U5 snRNAs and at least PRP3, PRP4, PRP6, PRP8, PRP18, PRP31, PRP38, SNU13, SNU23, SNU66, SNU114, SPP381, SMB1, SMD1, SMD2, SMD3, SMX2, SMX3, LSM2, LSM3, LSM4, LSM5, LSM6, LSM7, LSM8, BRR2 and DIB1.

It is found in the nucleus. Functionally, involved in RNA splicing. Is required for the association of U4/U6 snRNP with U5 snRNP in an early step of spliceosome assembly. This chain is U4/U6 small nuclear ribonucleoprotein PRP4 (PRP4), found in Saccharomyces cerevisiae (strain ATCC 204508 / S288c) (Baker's yeast).